The sequence spans 443 residues: 3-isopropylmalate dehydratase large subunit (443 aa).

Cysteine 347, cysteine 407, and cysteine 410 together coordinate [4Fe-4S] cluster.

The protein belongs to the aconitase/IPM isomerase family. LeuC type 1 subfamily. As to quaternary structure, heterodimer of LeuC and LeuD. Requires [4Fe-4S] cluster as cofactor.

The enzyme catalyses (2R,3S)-3-isopropylmalate = (2S)-2-isopropylmalate. The protein operates within amino-acid biosynthesis; L-leucine biosynthesis; L-leucine from 3-methyl-2-oxobutanoate: step 2/4. In terms of biological role, catalyzes the isomerization between 2-isopropylmalate and 3-isopropylmalate, via the formation of 2-isopropylmaleate. The polypeptide is 3-isopropylmalate dehydratase large subunit (Buchnera aphidicola subsp. Uroleucon sonchi).